A 390-amino-acid chain; its full sequence is Protein phosphatase 1B (390 aa).

Over residues 1-14 (MGAFLDKPKTEKHN) the composition is skewed to basic and acidic residues. The segment at 1-20 (MGAFLDKPKTEKHNAHGAGN) is disordered. Residue Gly2 is the site of N-myristoyl glycine attachment. A Glycyl lysine isopeptide (Lys-Gly) (interchain with G-Cter in ISG15) cross-link involves residue Lys12. A PPM-type phosphatase domain is found at 23-295 (RYGLSSMQGW…DNMSVVLVCF (273 aa)). Mn(2+) is bound by residues Asp60, Gly61, Asp243, and Asp286. The tract at residues 371–390 (NPHKDNDGGAGDLEDSLVAL) is disordered. Phosphoserine is present on Ser386.

It belongs to the PP2C family. In terms of assembly, monomer. Interacts with PAK6. Interacts with the phosphorylated form of IKBKB/IKKB. Mg(2+) serves as cofactor. The cofactor is Mn(2+). In terms of processing, isgylation negatively regulates its activity. Post-translationally, N-myristoylation is essential for the recognition of its substrates for dephosphorylation. Isoform 1: Expressed ubiquitously. Isoform 2: Expressed exclusively in testis and intestine. Isoform 3: Expressed exclusively in brain and intestine. Isoform 4: Expressed exclusively in testis and intestine.

Its subcellular location is the cytoplasm. It localises to the cytosol. The protein resides in the membrane. The enzyme catalyses O-phospho-L-seryl-[protein] + H2O = L-seryl-[protein] + phosphate. It catalyses the reaction O-phospho-L-threonyl-[protein] + H2O = L-threonyl-[protein] + phosphate. Functionally, enzyme with a broad specificity. Dephosphorylates PRKAA1 and PRKAA2. Inhibits TBK1-mediated antiviral signaling by dephosphorylating it at 'Ser-172'. Plays an important role in the termination of TNF-alpha-mediated NF-kappa-B activation through dephosphorylating and inactivating IKBKB/IKKB. This is Protein phosphatase 1B (Ppm1b) from Mus musculus (Mouse).